Consider the following 286-residue polypeptide: Acetyl-coenzyme A carboxylase carboxyl transferase subunit beta (286 aa).

Positions Ile-23 to Glu-286 constitute a CoA carboxyltransferase N-terminal domain. Cys-27, Cys-30, Cys-46, and Cys-49 together coordinate Zn(2+). The segment at Cys-27–Cys-49 adopts a C4-type zinc-finger fold.

The protein belongs to the AccD/PCCB family. As to quaternary structure, acetyl-CoA carboxylase is a heterohexamer composed of biotin carboxyl carrier protein (AccB), biotin carboxylase (AccC) and two subunits each of ACCase subunit alpha (AccA) and ACCase subunit beta (AccD). Zn(2+) serves as cofactor.

The protein resides in the cytoplasm. It catalyses the reaction N(6)-carboxybiotinyl-L-lysyl-[protein] + acetyl-CoA = N(6)-biotinyl-L-lysyl-[protein] + malonyl-CoA. Its pathway is lipid metabolism; malonyl-CoA biosynthesis; malonyl-CoA from acetyl-CoA: step 1/1. In terms of biological role, component of the acetyl coenzyme A carboxylase (ACC) complex. Biotin carboxylase (BC) catalyzes the carboxylation of biotin on its carrier protein (BCCP) and then the CO(2) group is transferred by the transcarboxylase to acetyl-CoA to form malonyl-CoA. The sequence is that of Acetyl-coenzyme A carboxylase carboxyl transferase subunit beta from Wigglesworthia glossinidia brevipalpis.